Here is a 125-residue protein sequence, read N- to C-terminus: Period circadian protein (125 aa).

Residues 1–125 (EGSGGSGSSG…VTLTESLLNK (125 aa)) form a disordered region. Tandem repeats lie at residues 30 to 31 (GT), 33 to 34 (GT), and 35 to 36 (GT). The segment covering 30–84 (GTGGTGTNTGTNTGTGTGTGTGTGTGTGTGTGTGTGTGTGTGTGTGTGKGAGAGT) has biased composition (gly residues). Positions 30 to 86 (GTGGTGTNTGTNTGTGTGTGTGTGTGTGTGTGTGTGTGTGTGTGTGTGKGAGAGTGT) are 28 X 2 AA approximate tandem repeats of G-[TA]. One copy of the 4; approximate repeat lies at 37 to 38 (NT). Residues 39 to 40 (GT) form repeat 5. A 6; approximate repeat occupies 41-42 (NT). 17 repeat units span residues 43–44 (GT), 45–46 (GT), 47–48 (GT), 49–50 (GT), 51–52 (GT), 53–54 (GT), 55–56 (GT), 57–58 (GT), 59–60 (GT), 61–62 (GT), 63–64 (GT), 65–66 (GT), 67–68 (GT), 69–70 (GT), 71–72 (GT), 73–74 (GT), and 75–76 (GT). The 24; approximate repeat unit spans residues 77 to 78 (GK). Repeat copies occupy residues 79–80 (GA), 81–82 (GA), 83–84 (GT), and 85–86 (GT). Residues 85–112 (GTATNETAGPGTTTTTTTRSTTTAATAA) show a composition bias toward low complexity. Positions 116–125 (VTLTESLLNK) are enriched in polar residues.

In terms of assembly, forms a heterodimer with timeless (TIM); the complex then translocates into the nucleus. Post-translationally, phosphorylated with a circadian rhythmicity, probably by the double-time protein (dbt). Phosphorylation could be implicated in the stability of per monomer and in the formation of heterodimer per-tim.

It localises to the nucleus. Its subcellular location is the cytoplasm. The protein resides in the perinuclear region. Functionally, essential for biological clock functions. Determines the period length of circadian and ultradian rhythms; an increase in PER dosage leads to shortened circadian rhythms and a decrease leads to lengthened circadian rhythms. Essential for the circadian rhythmicity of locomotor activity, eclosion behavior, and for the rhythmic component of the male courtship song that originates in the thoracic nervous system. The biological cycle depends on the rhythmic formation and nuclear localization of the TIM-PER complex. Light induces the degradation of TIM, which promotes elimination of PER. Nuclear activity of the heterodimer coordinatively regulates PER and TIM transcription through a negative feedback loop. Behaves as a negative element in circadian transcriptional loop. Does not appear to bind DNA, suggesting indirect transcriptional inhibition. The chain is Period circadian protein (per) from Drosophila ananassae (Fruit fly).